We begin with the raw amino-acid sequence, 1382 residues long: DNA-directed RNA polymerase subunit beta'' (1382 aa).

Zn(2+)-binding residues include Cys-224, Cys-294, Cys-301, and Cys-304.

This sequence belongs to the RNA polymerase beta' chain family. RpoC2 subfamily. In terms of assembly, in plastids the minimal PEP RNA polymerase catalytic core is composed of four subunits: alpha, beta, beta', and beta''. When a (nuclear-encoded) sigma factor is associated with the core the holoenzyme is formed, which can initiate transcription. Zn(2+) is required as a cofactor.

The protein localises to the plastid. It localises to the chloroplast. The catalysed reaction is RNA(n) + a ribonucleoside 5'-triphosphate = RNA(n+1) + diphosphate. In terms of biological role, DNA-dependent RNA polymerase catalyzes the transcription of DNA into RNA using the four ribonucleoside triphosphates as substrates. The sequence is that of DNA-directed RNA polymerase subunit beta'' from Liriodendron tulipifera (Tuliptree).